The sequence spans 1957 residues: Chromatin modification-related protein EAF1 A (1957 aa).

4 disordered regions span residues 108 to 208, 261 to 287, 323 to 373, and 449 to 469; these read ASPH…TDLV, NRVS…GSKT, GGSP…SHAN, and NQSH…ETEK. Basic and acidic residues predominate over residues 140–151; that stretch reads SENKSVEGERNL. Composition is skewed to polar residues over residues 261-270, 333-342, and 355-372; these read NRVSSNSLNT, GQKNSSTQLN, and TNRG…SSHA. Residues 563-641 enclose the HSA domain; the sequence is CGTAPVEVRE…LSNAILQFWS (79 aa). Disordered regions lie at residues 833-909 and 928-950; these read GSNS…AVQK and AETS…DQTW. A compositionally biased stretch (polar residues) spans 884–898; sequence TDASSGDTSSFQDEY. One can recognise an SANT domain in the interval 1049 to 1105; sequence SGNPWSLFEDQALVVLVHDMGPNWELISDAMNSTLKIKCIYRNPTECKDRHKILMDK. 7 disordered regions span residues 1107-1131, 1282-1314, 1344-1367, 1449-1644, 1687-1768, 1804-1840, and 1876-1957; these read AGDG…PGIP, TPVL…GLQS, LSGR…DRGH, QGNS…QQLN, PVRP…IAPA, ELSK…PQAS, and SSNT…TKVE. 6 stretches are compositionally biased toward polar residues: residues 1116 to 1125, 1290 to 1314, 1344 to 1358, 1459 to 1472, 1479 to 1492, and 1501 to 1510; these read DSGNSQSYPS, AHPS…GLQS, LSGR…STPA, SNLS…TTPV, LSQQ…SHVL, and QSPSQATGAQ. Low complexity-rich tracts occupy residues 1523–1534 and 1545–1562; these read QRYLQQQQQQQQ and VQQP…NSPQ. Positions 1563–1579 are enriched in pro residues; the sequence is TQPPVSPQPLSMPPVSP. Polar residues-rich tracts occupy residues 1582–1595, 1604–1618, 1635–1644, 1691–1722, and 1734–1758; these read NINA…QKSQ, SPQS…QAGK, RQPTQGQQLN, DQQS…QQLP, and QQQM…CNIL. Over residues 1759 to 1768 the composition is skewed to low complexity; that stretch reads STSSPSIAPA. Basic and acidic residues predominate over residues 1805 to 1815; sequence LSKKSQAERMP. Composition is skewed to polar residues over residues 1819–1832 and 1876–1894; these read QSVT…SMGT and SSNT…NQGL. 2 stretches are compositionally biased toward basic and acidic residues: residues 1913-1922 and 1932-1942; these read SEEKRPKLPE and LASEEQPHLEE.

Belongs to the EAF1 family. In terms of assembly, component of the NuA4 histone acetyltransferase complex. Interacts with ARP4 and SWC4, and (via HSA domain) with TAF14 and TAF14B. Expressed in leaves.

The protein localises to the nucleus. In terms of biological role, component of the NuA4 histone acetyltransferase complex which is involved in transcriptional activation of selected genes principally by acetylation of nucleosomal histone H4 and H2A. This Arabidopsis thaliana (Mouse-ear cress) protein is Chromatin modification-related protein EAF1 A (EAF1A).